Consider the following 74-residue polypeptide: Antimicrobial peptide 36.4 (74 aa).

A signal peptide spans 1-22 (MKVNVLLAVFLVVMVVTDHCHA). Lysine 39 carries the lysine amide modification. Residues 44 to 74 (LQMEARFQPQNKNYRKRELDLENLFTHMPDY) constitute a propeptide that is removed on maturation.

It belongs to the non-disulfide-bridged peptide (NDBP) superfamily. Short antimicrobial peptide (group 4) family. Expressed by the venom gland.

It localises to the secreted. It is found in the target cell membrane. Functionally, cationic host defense peptide that have antibacterial activity by breaking membranes. Is more effective on Gram-positive than on Gram-negative bacteria. This Lychas mucronatus (Chinese swimming scorpion) protein is Antimicrobial peptide 36.4.